The following is a 201-amino-acid chain: Small ribosomal subunit protein uS4c (201 aa).

The interval 20 to 44 is disordered; the sequence is GLTSKRPRAGSDLRNQSRSGKKSQY. An S4 RNA-binding domain is found at 89-152; it reads MRLDNILFRL…NSRTLVQNLL (64 aa).

Belongs to the universal ribosomal protein uS4 family. In terms of assembly, part of the 30S ribosomal subunit. Contacts protein S5. The interaction surface between S4 and S5 is involved in control of translational fidelity.

Its subcellular location is the plastid. The protein localises to the chloroplast. Functionally, one of the primary rRNA binding proteins, it binds directly to 16S rRNA where it nucleates assembly of the body of the 30S subunit. With S5 and S12 plays an important role in translational accuracy. The protein is Small ribosomal subunit protein uS4c (rps4) of Aethionema cordifolium (Lebanon stonecress).